Consider the following 644-residue polypeptide: MQTVRMTTAQALVKFLNQQYVEFDGKQQKFIKGIFTIFGHGNVVGLGQALEEDAGELEVYQGRNEQGMANAAMAFAKQKHRKQIMACTSSVGPGSANMITSAATASANNIPVLLLPGDVFATRQPDPVLQQIEQTHDLSISTNDAFRAVSKYWDRINRPEQLMTAMIQAMRVLTNPADTGAVTICLPQDVQGEAWDFPSYFFQKRVHRIERRLPTKASLADAVEMIKRKKKPVMICGGGVRYAEAAEELKQFAETFHIPFGETQAGKSAIESSHPYNLGGIGVTGNIAANTIAKEADLVIGIGTRFTDFTTASKQLFQNEEVEFVNINISEFHANKLDALKVIADAKEALLTLIDELQVIDYRSSYTVEIADAKEAWETELSRLHNIRFTGQDFTPEVEGHFDGNLNEYVDALGSQLTQTAVIGQINTLLDEDAIIVGAAGSLPGDLQRMWASRKPNTYHMEYGYSCMGYEVAGALGAKIAEPSKEVYAMVGDGSYQMLHSELVTSLQENKKINVLLFDNSGFGCINNLQMGNGMGSFGTEFRYRNQETRKLDGAIMKIDFAASAAGYGVKTYHVTSLEQLREALIDAKKQTVSTLIDIKVLPKTMTNGYESWWHVGVAEVSKSQSVQAAYESKVSNLQQARSY.

Residue E65 coordinates thiamine diphosphate. Positions 442-522 (SLPGDLQRMW…INVLLFDNSG (81 aa)) are thiamine pyrophosphate binding. Positions 493 and 520 each coordinate Mg(2+).

The protein belongs to the TPP enzyme family. Mg(2+) is required as a cofactor. It depends on thiamine diphosphate as a cofactor.

The enzyme catalyses 3D-3,5/4-trihydroxycyclohexane-1,2-dione + H2O = 5-deoxy-D-glucuronate + H(+). It functions in the pathway polyol metabolism; myo-inositol degradation into acetyl-CoA; acetyl-CoA from myo-inositol: step 3/7. Functionally, involved in the cleavage of the C1-C2 bond of 3D-(3,5/4)-trihydroxycyclohexane-1,2-dione (THcHDO) to yield 5-deoxy-glucuronate (5DG). The chain is 3D-(3,5/4)-trihydroxycyclohexane-1,2-dione hydrolase 1 from Bacillus cereus (strain ZK / E33L).